The chain runs to 165 residues: Cyclic pyranopterin monophosphate synthase (165 aa).

Substrate-binding positions include 83 to 85 and 120 to 121; these read FCH and ME. The active site involves aspartate 135.

The protein belongs to the MoaC family. In terms of assembly, homohexamer; trimer of dimers.

The enzyme catalyses (8S)-3',8-cyclo-7,8-dihydroguanosine 5'-triphosphate = cyclic pyranopterin phosphate + diphosphate. It functions in the pathway cofactor biosynthesis; molybdopterin biosynthesis. Functionally, catalyzes the conversion of (8S)-3',8-cyclo-7,8-dihydroguanosine 5'-triphosphate to cyclic pyranopterin monophosphate (cPMP). The polypeptide is Cyclic pyranopterin monophosphate synthase (Xanthomonas campestris pv. campestris (strain 8004)).